The following is a 438-amino-acid chain: Acid phosphatase type 7 (438 aa).

The first 23 residues, 1–23 (MSPFLGGWLFFCMLLPFSPGVQG), serve as a signal peptide directing secretion. Positions 141, 170, and 173 each coordinate Fe cation. Position 170 (D170) interacts with Zn(2+). N205 is a Zn(2+) binding site. N-linked (GlcNAc...) asparagine glycosylation occurs at N211. Positions 286 and 333 each coordinate Zn(2+). Fe cation is bound at residue H335. 2 N-linked (GlcNAc...) asparagine glycosylation sites follow: N350 and N404.

Belongs to the metallophosphoesterase superfamily. Purple acid phosphatase family. The cofactor is Fe cation. It depends on Zn(2+) as a cofactor.

The protein resides in the secreted. The catalysed reaction is a phosphate monoester + H2O = an alcohol + phosphate. The sequence is that of Acid phosphatase type 7 from Mus musculus (Mouse).